The following is a 128-amino-acid chain: Glycine cleavage system H protein 2 (128 aa).

One can recognise a Lipoyl-binding domain in the interval 24–105 (TVTVGISDHA…PYSAWIFKVK (82 aa)). The residue at position 65 (Lys65) is an N6-lipoyllysine.

It belongs to the GcvH family. The glycine cleavage system is composed of four proteins: P, T, L and H. (R)-lipoate serves as cofactor.

In terms of biological role, the glycine cleavage system catalyzes the degradation of glycine. The H protein shuttles the methylamine group of glycine from the P protein to the T protein. This chain is Glycine cleavage system H protein 2, found in Pseudomonas syringae pv. tomato (strain ATCC BAA-871 / DC3000).